The following is a 1243-amino-acid chain: Interphotoreceptor matrix proteoglycan 2 (1243 aa).

Positions 1-27 (MIMFLPVGRMSLGILILFLTGGNLVSA) are cleaved as a signal peptide. Topologically, residues 28-1106 (SEERQEPMHA…EFVSEPFVIG (1079 aa)) are extracellular. The segment at 205 to 234 (GLASESSAASPQESISNEIENVTEEPTQPA) is disordered. Residues 207-220 (ASESSAASPQESIS) are compositionally biased toward low complexity. Residues 221-230 (NEIENVTEEP) show a composition bias toward polar residues. Asn-225 is a glycosylation site (N-linked (GlcNAc...) asparagine). One can recognise an SEA 1 domain in the interval 235 to 349 (AEQIAEFSIQ…KPTAVYTISN (115 aa)). The tract at residues 255–263 (RDPSSALYR) is hyaluronan-binding motif involved in chondroitin sulfate A-binding. Residues Asn-297, Asn-316, and Asn-366 are each glycosylated (N-linked (GlcNAc...) asparagine). Thr-427, Thr-428, and Thr-429 each carry an O-linked (GalNAc...) threonine glycan. Asn-582 carries an N-linked (GlcNAc...) asparagine glycan. Residues Thr-701, Thr-704, and Thr-712 are each glycosylated (O-linked (GalNAc...) threonine). Over residues 748–762 (EDMVHTESSSHKELD) the composition is skewed to basic and acidic residues. The tract at residues 748–768 (EDMVHTESSSHKELDSEVPVS) is disordered. 2 O-linked (GalNAc...) threonine glycosylation sites follow: Thr-817 and Thr-888. The region spanning 900–1013 (GALVVFFSLR…YSLDVESGDE (114 aa)) is the SEA 2 domain. Asn-945 and Asn-959 each carry an N-linked (GlcNAc...) asparagine glycan. 2 EGF-like domains span residues 1013-1054 (EANP…LPCQ) and 1055-1096 (SLCD…QHCE). Intrachain disulfides connect Cys-1017–Cys-1028, Cys-1022–Cys-1039, Cys-1041–Cys-1053, Cys-1057–Cys-1070, Cys-1064–Cys-1080, and Cys-1082–Cys-1095. Residues 1083-1091 (RVGSNWWYR) form a hyaluronan-binding motif involved in chondroitin sulfate C-binding region. Residues 1107–1127 (ITIASVVSFLLVASAVVFFLV) form a helical membrane-spanning segment. The tract at residues 1128–1136 (KMLQAQNVR) is hyaluronan-binding motif involved in chondroitin sulfate A- and C-binding. The Cytoplasmic portion of the chain corresponds to 1128-1243 (KMLQAQNVRR…FVREHQMEEL (116 aa)). A hyaluronan-binding motif involved in chondroitin sulfate C-binding region spans residues 1139-1147 (RQRPTSSSR). Residues 1212–1220 (KEEIQERMR) are hyaluronan-binding motif involved in chondroitin sulfate A- and C-binding motif.

Expressed in the retina (at protein level). Expressed in the pineal gland.

The protein resides in the photoreceptor outer segment membrane. It is found in the photoreceptor inner segment membrane. Its subcellular location is the secreted. The protein localises to the extracellular space. It localises to the extracellular matrix. The protein resides in the interphotoreceptor matrix. In terms of biological role, chondroitin sulfate- and hyaluronan-binding proteoglycan involved in the organization of interphotoreceptor matrix; may participate in the maturation and maintenance of the light-sensitive photoreceptor outer segment. Binds heparin. This Mus musculus (Mouse) protein is Interphotoreceptor matrix proteoglycan 2 (Impg2).